The primary structure comprises 63 residues: Conotoxin Gm5.1 (63 aa).

Positions 1–21 (MRYLPVFVILLLLIASIPSDT) are cleaved as a signal peptide. A propeptide spanning residues 22 to 50 (VQLKTKDDMPLASFHGNGRRILRMLSNKR) is cleaved from the precursor.

The protein belongs to the conotoxin T superfamily. Post-translationally, contains 2 disulfide bonds that can be either 'C1-C3, C2-C4' or 'C1-C4, C2-C3', since these disulfide connectivities have been observed for conotoxins with cysteine framework V (for examples, see AC P0DQQ7 and AC P81755). In terms of tissue distribution, expressed by the venom duct.

It is found in the secreted. In Conus gloriamaris (Glory-of-the-Sea cone), this protein is Conotoxin Gm5.1.